We begin with the raw amino-acid sequence, 239 residues long: Sugar fermentation stimulation protein homolog (239 aa).

The protein belongs to the SfsA family.

The sequence is that of Sugar fermentation stimulation protein homolog from Methylobacterium sp. (strain 4-46).